The chain runs to 214 residues: Dephospho-CoA kinase (214 aa).

The DPCK domain maps to 20–214; sequence RIGITGGIAS…KLQLKKLYKF (195 aa). 28 to 33 contributes to the ATP binding site; it reads ASGKTI.

Belongs to the CoaE family.

It localises to the cytoplasm. The enzyme catalyses 3'-dephospho-CoA + ATP = ADP + CoA + H(+). Its pathway is cofactor biosynthesis; coenzyme A biosynthesis; CoA from (R)-pantothenate: step 5/5. In terms of biological role, catalyzes the phosphorylation of the 3'-hydroxyl group of dephosphocoenzyme A to form coenzyme A. This Prochlorococcus marinus (strain NATL2A) protein is Dephospho-CoA kinase.